Consider the following 338-residue polypeptide: RAB6-interacting golgin (338 aa).

2 stretches are compositionally biased toward basic and acidic residues: residues 1–14 and 46–59; these read MTEK…DEIL and RMPD…DQLR. Disordered stretches follow at residues 1-109 and 127-188; these read MTEK…LNLD and ARDK…SPFK. Composition is skewed to low complexity over residues 60–73 and 153–167; these read KQQQ…IQKP and SGGD…DDGS. The stretch at 192 to 244 forms a coiled coil; the sequence is LKDFEQHRRMIEEQNKQKKQMLYQAIEQHTQKTAAESRKIEEIRHELSKLESD. The essential for Sas-6 binding stretch occupies residues 244–260; it reads DLAVDVALLRKQIDNAC. The segment at 246–286 is necessary for localization to the centrosome; it reads AVDVALLRKQIDNACIHFANVEKQYVKIEAQFLRAKIELHN. The necessary for localization to the Golgi stretch occupies residues 246-323; sequence AVDVALLRKQ…TELMQKVGLS (78 aa). Residues 260 to 286 form a necessary for interaction with Sas-6 and essential for homodimerization region; it reads CIHFANVEKQYVKIEAQFLRAKIELHN.

It belongs to the GORAB family. As to quaternary structure, homodimer (via C-terminus); dimerization appears to be required for its trans-Golgi localization but not for its function and centriolar localization. Interacts (via C-terminus) with Rab6; binds Rab6 as a homodimer, this interaction seems to be required for trans-Golgi localization. Interacts (via C-terminus) with Sas-6; binds as a monomer to a Sas-6 homodimer.

The protein localises to the cytoplasm. Its subcellular location is the cytoskeleton. It localises to the microtubule organizing center. It is found in the centrosome. The protein resides in the centriole. The protein localises to the golgi apparatus. Its subcellular location is the trans-Golgi network. Required for centriole duplication likely through its interaction with Sas-6. During embryogenesis, maternally provided protein is required for centrosome duplication and nuclear division cycles of the syncytial embryos. In femoral chordotonal organs, required for sensory cilia structural integrity and functionality necessary for motor coordination. In male germline, has a role in cytokinesis which seems dependent on its localization to the Golgi. The chain is RAB6-interacting golgin from Drosophila melanogaster (Fruit fly).